The sequence spans 191 residues: Peptide methionine sulfoxide reductase MsrA (191 aa).

Cys21 is an active-site residue.

Belongs to the MsrA Met sulfoxide reductase family.

It carries out the reaction L-methionyl-[protein] + [thioredoxin]-disulfide + H2O = L-methionyl-(S)-S-oxide-[protein] + [thioredoxin]-dithiol. The catalysed reaction is [thioredoxin]-disulfide + L-methionine + H2O = L-methionine (S)-S-oxide + [thioredoxin]-dithiol. Functionally, has an important function as a repair enzyme for proteins that have been inactivated by oxidation. Catalyzes the reversible oxidation-reduction of methionine sulfoxide in proteins to methionine. The polypeptide is Peptide methionine sulfoxide reductase MsrA (Ralstonia nicotianae (strain ATCC BAA-1114 / GMI1000) (Ralstonia solanacearum)).